The primary structure comprises 73 residues: Small ribosomal subunit protein bS21 (73 aa).

The protein belongs to the bacterial ribosomal protein bS21 family.

This is Small ribosomal subunit protein bS21 from Parvibaculum lavamentivorans (strain DS-1 / DSM 13023 / NCIMB 13966).